The sequence spans 729 residues: Monosaccharide-sensing protein 3 (729 aa).

6 helical membrane-spanning segments follow: residues 5-25 (VLVA…NATI), 46-66 (GLIV…SGPV), 81-101 (VLYF…VLLF), 104-124 (LLDG…ISET), 135-155 (TFPQ…VFGM), and 165-185 (LMLG…AFFL). The segment at 337–372 (QESQWDPERNNEDSSDQDENLNSPLLSPQTTEPDDY) is disordered. The span at 356 to 367 (NLNSPLLSPQTT) shows a compositional bias: polar residues. Ser446 bears the Phosphoserine mark. 6 consecutive transmembrane segments (helical) span residues 511–531 (ALMV…NGVM), 557–577 (ASLL…LVSM), 581–601 (MLST…GSLV), 610–630 (LIST…FGAI), 650–670 (ICAL…PVML), and 673–693 (IGIA…WVFV).

Belongs to the major facilitator superfamily. Sugar transporter (TC 2.A.1.1) family. Weakly expressed.

Its subcellular location is the vacuole membrane. The catalysed reaction is D-glucose(out) + H(+)(in) = D-glucose(in) + H(+)(out). It carries out the reaction sucrose(out) + H(+)(in) = sucrose(in) + H(+)(out). Its function is as follows. Sugar proton-coupled antiporter which contributes to vacuolar sugar import (e.g. monosaccharides including glucose,sucrose and fructose), particularly during stress responses (e.g. in response to cold). This is Monosaccharide-sensing protein 3 from Arabidopsis thaliana (Mouse-ear cress).